The sequence spans 388 residues: Lipoyl synthase, mitochondrial (388 aa).

The transit peptide at 1–18 (MRLTTVQRRFLVSTKAKV) directs the protein to the mitochondrion. Positions 22–39 (SISSTANTGSASAGAPNG) are enriched in low complexity. The tract at residues 22 to 43 (SISSTANTGSASAGAPNGQTRR) is disordered. The [4Fe-4S] cluster site is built by C120, C125, C131, C151, C155, C158, and S366. The Radical SAM core domain maps to 134-355 (GKDKSKATAT…KDKAKEMGFL (222 aa)).

This sequence belongs to the radical SAM superfamily. Lipoyl synthase family. [4Fe-4S] cluster is required as a cofactor.

The protein localises to the mitochondrion. It carries out the reaction [[Fe-S] cluster scaffold protein carrying a second [4Fe-4S](2+) cluster] + N(6)-octanoyl-L-lysyl-[protein] + 2 oxidized [2Fe-2S]-[ferredoxin] + 2 S-adenosyl-L-methionine + 4 H(+) = [[Fe-S] cluster scaffold protein] + N(6)-[(R)-dihydrolipoyl]-L-lysyl-[protein] + 4 Fe(3+) + 2 hydrogen sulfide + 2 5'-deoxyadenosine + 2 L-methionine + 2 reduced [2Fe-2S]-[ferredoxin]. It functions in the pathway protein modification; protein lipoylation via endogenous pathway; protein N(6)-(lipoyl)lysine from octanoyl-[acyl-carrier-protein]: step 2/2. In terms of biological role, catalyzes the radical-mediated insertion of two sulfur atoms into the C-6 and C-8 positions of the octanoyl moiety bound to the lipoyl domains of lipoate-dependent enzymes, thereby converting the octanoylated domains into lipoylated derivatives. In Candida glabrata (strain ATCC 2001 / BCRC 20586 / JCM 3761 / NBRC 0622 / NRRL Y-65 / CBS 138) (Yeast), this protein is Lipoyl synthase, mitochondrial.